Consider the following 399-residue polypeptide: Ornithine aminotransferase (399 aa).

N6-(pyridoxal phosphate)lysine is present on Lys255.

It belongs to the class-III pyridoxal-phosphate-dependent aminotransferase family. OAT subfamily. Requires pyridoxal 5'-phosphate as cofactor.

It is found in the cytoplasm. The catalysed reaction is a 2-oxocarboxylate + L-ornithine = L-glutamate 5-semialdehyde + an L-alpha-amino acid. The protein operates within amino-acid biosynthesis; L-proline biosynthesis; L-glutamate 5-semialdehyde from L-ornithine: step 1/1. In terms of biological role, catalyzes the interconversion of ornithine to glutamate semialdehyde. The chain is Ornithine aminotransferase from Brevibacillus brevis (strain 47 / JCM 6285 / NBRC 100599).